Consider the following 332-residue polypeptide: MTVTANQVLRPRGPQIERLTDNRAKVVIEPLERGYGHTLGNALRRVLLSSIPGFAITEVEIDGVLHEYTTVEGLQEDVLDVLLNLKDVAIRMHSGDSATLSLSKQGPGTVTAADIRTDHNVEIINGDHVICHLTKDTALNMRLKIERGFGYQPAAARRRPDEETRTIGRLMLDASFSPVRRVAYAVEAARVEQRTDLDKLVIDIETNGTIDAEEAVRTAADILSDQLSVFGDFTHRDRGAAKPAASGVDPVLLRPIDDLELTVRSANCLKAESIYYIGDLIQKTEVELLKTPNLGKKSLTEIKEVLAQRGLALGMKLENWPPAGVAQHGMLG.

Residues 2–234 (TVTANQVLRP…DQLSVFGDFT (233 aa)) form an alpha N-terminal domain (alpha-NTD) region. The interval 248 to 332 (VDPVLLRPID…AGVAQHGMLG (85 aa)) is alpha C-terminal domain (alpha-CTD).

This sequence belongs to the RNA polymerase alpha chain family. Homodimer. The RNAP catalytic core consists of 2 alpha, 1 beta, 1 beta' and 1 omega subunit. When a sigma factor is associated with the core the holoenzyme is formed, which can initiate transcription.

The catalysed reaction is RNA(n) + a ribonucleoside 5'-triphosphate = RNA(n+1) + diphosphate. DNA-dependent RNA polymerase catalyzes the transcription of DNA into RNA using the four ribonucleoside triphosphates as substrates. The polypeptide is DNA-directed RNA polymerase subunit alpha (Xanthomonas axonopodis pv. citri (strain 306)).